A 1104-amino-acid chain; its full sequence is Collagenase ColA (1104 aa).

Positions 1–39 (MKKNLKRGELTKLKLVERWSATFTLAAFILFNSSFKVLA) are cleaved as a signal peptide. A propeptide spanning residues 40–86 (ADKKVENSNNGQITREINADQISKTELNNEVATDNNRPLGPSIAPSR) is cleaved from the precursor. Positions 87–761 (ARNNKIYTFD…YVYDVVFHGM (675 aa)) are S1 metalloprotease domain. The segment at 93–367 (YTFDELNRMN…AANDLDLNFG (275 aa)) is activator domain. Residues 377 to 646 (DFNKIKADAR…MDSLLNNIDN (270 aa)) are catalytic subdomain. Glutamate 477 is a binding site for Ca(2+). Position 502 (histidine 502) interacts with Zn(2+). Glutamate 503 is a catalytic residue. Zn(2+) is bound at residue histidine 506. Ca(2+) contacts are provided by glycine 510, valine 514, and glycine 516. Glutamate 534 is a Zn(2+) binding site. Residues 654 to 767 (DEYVNGHEAK…FHGMNTDTNT (114 aa)) form a helper subdomain region. An S2 domain region spans residues 762–860 (NTDTNTDVHV…KKIKVVEDKP (99 aa)). Positions 772, 773, 800, 802, 841, 866, 868, 870, 894, 897, 993, 995, 997, 1016, 1020, 1022, and 1023 each coordinate Ca(2+). One can recognise a PKD domain in the interval 774 to 862 (EPKAVIKSDS…IKVVEDKPVE (89 aa)). An S3a collagen-binding domain region spans residues 865-979 (NESEPNNDFE…TYTVNVKGNL (115 aa)). The S3b collagen-binding domain stretch occupies residues 992–1104 (KEVENNNDFD…GNYIVNLQNK (113 aa)).

Belongs to the peptidase M9B family. Collagenase subfamily. Ca(2+) is required as a cofactor. It depends on Zn(2+) as a cofactor.

The protein localises to the secreted. The enzyme catalyses Digestion of native collagen in the triple helical region at Xaa-|-Gly bonds. With synthetic peptides, a preference is shown for Gly at P3 and P1', Pro and Ala at P2 and P2', and hydroxyproline, Ala or Arg at P3'.. Functionally, clostridial collagenases are among the most efficient degraders of eukaryotic collagen known; saprophytes use collagen as a carbon source while pathogens additionally digest collagen to aid in host colonization. Has both tripeptidylcarboxypeptidase on Gly-X-Y and endopeptidase activities; the endopeptidase cuts within the triple helix region of collagen while tripeptidylcarboxypeptidase successively digests the exposed ends, thus clostridial collagenases can digest large sections of collagen. In Clostridium perfringens (strain 13 / Type A), this protein is Collagenase ColA (colA).